The sequence spans 259 residues: Tryptophan synthase alpha chain (259 aa).

Catalysis depends on proton acceptor residues Glu-35 and Asp-46.

This sequence belongs to the TrpA family. As to quaternary structure, tetramer of two alpha and two beta chains.

The catalysed reaction is (1S,2R)-1-C-(indol-3-yl)glycerol 3-phosphate + L-serine = D-glyceraldehyde 3-phosphate + L-tryptophan + H2O. Its pathway is amino-acid biosynthesis; L-tryptophan biosynthesis; L-tryptophan from chorismate: step 5/5. Its function is as follows. The alpha subunit is responsible for the aldol cleavage of indoleglycerol phosphate to indole and glyceraldehyde 3-phosphate. The protein is Tryptophan synthase alpha chain of Methanococcus vannielii (strain ATCC 35089 / DSM 1224 / JCM 13029 / OCM 148 / SB).